We begin with the raw amino-acid sequence, 263 residues long: Putative hydro-lyase BPUM_0381 (263 aa).

This sequence belongs to the D-glutamate cyclase family.

This Bacillus pumilus (strain SAFR-032) protein is Putative hydro-lyase BPUM_0381.